We begin with the raw amino-acid sequence, 554 residues long: Formate--tetrahydrofolate ligase (554 aa).

Residue 64–71 (TPYGEGKT) participates in ATP binding.

This sequence belongs to the formate--tetrahydrofolate ligase family.

It catalyses the reaction (6S)-5,6,7,8-tetrahydrofolate + formate + ATP = (6R)-10-formyltetrahydrofolate + ADP + phosphate. It functions in the pathway one-carbon metabolism; tetrahydrofolate interconversion. The protein is Formate--tetrahydrofolate ligase of Caldicellulosiruptor saccharolyticus (strain ATCC 43494 / DSM 8903 / Tp8T 6331).